Reading from the N-terminus, the 136-residue chain is Class I hydrophobin 16 (136 aa).

Positions 1 to 19 (MKFTSVIALVATAATLVGA) are cleaved as a signal peptide. 4 disulfides stabilise this stretch: Cys58–Cys115, Cys65–Cys109, Cys66–Cys99, and Cys116–Cys129. The N-linked (GlcNAc...) asparagine glycan is linked to Asn74.

Belongs to the fungal hydrophobin family. Self-assembles to form functional amyloid fibrils called rodlets. Self-assembly into fibrillar rodlets occurs spontaneously at hydrophobic:hydrophilic interfaces and the rodlets further associate laterally to form amphipathic monolayers.

The protein localises to the secreted. It is found in the cell wall. Its function is as follows. Aerial growth, conidiation, and dispersal of filamentous fungi in the environment rely upon a capability of their secreting small amphipathic proteins called hydrophobins (HPBs) with low sequence identity. Class I can self-assemble into an outermost layer of rodlet bundles on aerial cell surfaces, conferring cellular hydrophobicity that supports fungal growth, development and dispersal; whereas Class II form highly ordered films at water-air interfaces through intermolecular interactions but contribute nothing to the rodlet structure. Hydph16 is a class I hydrophobin that has specific functions in aerial mycelium formation, cell wall stress protection, and cell wall structure formation, but does not seem to be involved in mycelial hydrophobicity. Specifically functions in resisting cell wall synthesis inhibitors. This is Class I hydrophobin 16 from Pleurotus ostreatus (strain PC15) (Oyster mushroom).